The chain runs to 415 residues: Gamma-glutamyl phosphate reductase (415 aa).

It belongs to the gamma-glutamyl phosphate reductase family.

Its subcellular location is the cytoplasm. It carries out the reaction L-glutamate 5-semialdehyde + phosphate + NADP(+) = L-glutamyl 5-phosphate + NADPH + H(+). Its pathway is amino-acid biosynthesis; L-proline biosynthesis; L-glutamate 5-semialdehyde from L-glutamate: step 2/2. Its function is as follows. Catalyzes the NADPH-dependent reduction of L-glutamate 5-phosphate into L-glutamate 5-semialdehyde and phosphate. The product spontaneously undergoes cyclization to form 1-pyrroline-5-carboxylate. The polypeptide is Gamma-glutamyl phosphate reductase (Bacillus velezensis (strain DSM 23117 / BGSC 10A6 / LMG 26770 / FZB42) (Bacillus amyloliquefaciens subsp. plantarum)).